Reading from the N-terminus, the 212-residue chain is Uridine kinase (212 aa).

12–19 (GGSGGGKT) is an ATP binding site.

Belongs to the uridine kinase family.

Its subcellular location is the cytoplasm. It catalyses the reaction uridine + ATP = UMP + ADP + H(+). The enzyme catalyses cytidine + ATP = CMP + ADP + H(+). The protein operates within pyrimidine metabolism; CTP biosynthesis via salvage pathway; CTP from cytidine: step 1/3. It functions in the pathway pyrimidine metabolism; UMP biosynthesis via salvage pathway; UMP from uridine: step 1/1. This chain is Uridine kinase, found in Streptococcus pneumoniae serotype 2 (strain D39 / NCTC 7466).